A 534-amino-acid chain; its full sequence is MTKYIFVTGGVVSSIGKGIVAASLGRLLKNRGLKVTIQKFDPYINIDPGTMSPYQHGEVYVTDDGAETDLDLGHYERFIDINLNKYSNVTTGKIYSEVLKKERRGEYLGATVQVIPHVTDALKEKIKRAATTTDSDVIITEVGGTVGDIESLPFLEALRQMKADVGSDNVMYIHTTLLPYLKAAGEMKTKPTQHSVKELRGLGIQPNMLVIRTEQPAGQSIKNKLAQFCDVAPEAVIESLDVDHIYQIPLNMQAQNMDQIVCDHLKLETPAADMTEWSAMVDKVMNLEKKVKIALVGKYVELPDAYLSVVEALKHSGYVNDVAIDLKWVNAAEVTEDNIKELVGDADGIIVPGGFGQRGSEGKIEAIRYARENDVPMLGVCLGMQLTCVEFARNVLNLHGANSAELDPKTPFPIIDIMRDQIDIEDMGGTLRLGLYPCKLKSGSRAAAAYNNQEVVQRRHRHRYEFNTKFREQFEAAGFVFSGVSPDNRLMEVVELPEKKFFVAAQYHPELQSRPNHAEELYTAFVTAAVENMK.

The tract at residues 1 to 267 (MTKYIFVTGG…DQIVCDHLKL (267 aa)) is amidoligase domain. Serine 13 serves as a coordination point for CTP. Position 13 (serine 13) interacts with UTP. 14–19 (SIGKGI) serves as a coordination point for ATP. An L-glutamine-binding site is contributed by tyrosine 54. Residue aspartate 71 coordinates ATP. Mg(2+)-binding residues include aspartate 71 and glutamate 141. Residues 148–150 (DIE), 188–193 (KTKPTQ), and lysine 224 contribute to the CTP site. UTP is bound by residues 188 to 193 (KTKPTQ) and lysine 224. Residues 292-534 (KIALVGKYVE…FVTAAVENMK (243 aa)) form the Glutamine amidotransferase type-1 domain. Glycine 354 contributes to the L-glutamine binding site. The active-site Nucleophile; for glutamine hydrolysis is the cysteine 381. L-glutamine contacts are provided by residues 382 to 385 (LGMQ), glutamate 405, and arginine 463. Catalysis depends on residues histidine 508 and glutamate 510.

It belongs to the CTP synthase family. In terms of assembly, homotetramer.

The catalysed reaction is UTP + L-glutamine + ATP + H2O = CTP + L-glutamate + ADP + phosphate + 2 H(+). The enzyme catalyses L-glutamine + H2O = L-glutamate + NH4(+). It catalyses the reaction UTP + NH4(+) + ATP = CTP + ADP + phosphate + 2 H(+). The protein operates within pyrimidine metabolism; CTP biosynthesis via de novo pathway; CTP from UDP: step 2/2. With respect to regulation, allosterically activated by GTP, when glutamine is the substrate; GTP has no effect on the reaction when ammonia is the substrate. The allosteric effector GTP functions by stabilizing the protein conformation that binds the tetrahedral intermediate(s) formed during glutamine hydrolysis. Inhibited by the product CTP, via allosteric rather than competitive inhibition. In terms of biological role, catalyzes the ATP-dependent amination of UTP to CTP with either L-glutamine or ammonia as the source of nitrogen. Regulates intracellular CTP levels through interactions with the four ribonucleotide triphosphates. In Streptococcus agalactiae serotype V (strain ATCC BAA-611 / 2603 V/R), this protein is CTP synthase.